The sequence spans 293 residues: Small ribosomal subunit protein uS5 (293 aa).

A disordered region spans residues 1–56 (MADDAGAAGGPGGPGGPGMGNRGGFRGGFGSGIRGRGRGRGRGRGRGRGARGGKAE). Ala-2 bears the N-acetylalanine mark. A compositionally biased stretch (gly residues) spans 7 to 34 (AAGGPGGPGGPGMGNRGGFRGGFGSGIR). Basic residues predominate over residues 35–51 (GRGRGRGRGRGRGRGAR). Glycyl lysine isopeptide (Lys-Gly) (interchain with G-Cter in ubiquitin) cross-links involve residues Lys-54 and Lys-58. The S5 DRBM domain maps to 102–165 (LKDEVLKIMP…ILAKLSIVPV (64 aa)). At Thr-252 the chain carries Phosphothreonine. N6-acetyllysine is present on Lys-263. Position 264 is a phosphoserine (Ser-264). The residue at position 270 (Thr-270) is a Phosphothreonine. Position 275 is an N6-acetyllysine; alternate (Lys-275). A Glycyl lysine isopeptide (Lys-Gly) (interchain with G-Cter in SUMO1); alternate cross-link involves residue Lys-275. Residue Lys-275 forms a Glycyl lysine isopeptide (Lys-Gly) (interchain with G-Cter in SUMO2); alternate linkage. Lys-275 is covalently cross-linked (Glycyl lysine isopeptide (Lys-Gly) (interchain with G-Cter in ubiquitin); alternate). Phosphoserine is present on Ser-281.

It belongs to the universal ribosomal protein uS5 family. In terms of assembly, component of the small ribosomal subunit. Interacts with zinc finger protein ZNF277 (via zinc-finger domains); the interaction is direct; the interaction is extra-ribosomal. Interaction with ZNF277 competes with the binding of RPS2 to protein arginine methyltransferase PRMT3. Post-translationally, citrullinated by PADI4 in the Arg/Gly-rich region. Asymmetric arginine dimethylation by PRMT3 occurs at multiple sites in the Arg/Gly-rich region. In terms of processing, monoubiquitinated at Lys-54 and Lys-58 by RNF10 when a ribosome has stalled during translation, leading to its degradation by the proteasome. Deubiquitinated at Lys-54 and Lys-58 by USP10, preventing degradation by the proteasome and promoting 40S ribosome subunit recycling following ribosome dissociation.

It is found in the cytoplasm. It localises to the nucleus. The protein localises to the nucleolus. In terms of biological role, component of the ribosome, a large ribonucleoprotein complex responsible for the synthesis of proteins in the cell. The small ribosomal subunit (SSU) binds messenger RNAs (mRNAs) and translates the encoded message by selecting cognate aminoacyl-transfer RNA (tRNA) molecules. The large subunit (LSU) contains the ribosomal catalytic site termed the peptidyl transferase center (PTC), which catalyzes the formation of peptide bonds, thereby polymerizing the amino acids delivered by tRNAs into a polypeptide chain. The nascent polypeptides leave the ribosome through a tunnel in the LSU and interact with protein factors that function in enzymatic processing, targeting, and the membrane insertion of nascent chains at the exit of the ribosomal tunnel. Plays a role in the assembly and function of the 40S ribosomal subunit. Mutations in this protein affects the control of translational fidelity. Involved in nucleolar processing of pre-18S ribosomal RNA and ribosome assembly. The polypeptide is Small ribosomal subunit protein uS5 (RPS2) (Homo sapiens (Human)).